Reading from the N-terminus, the 541-residue chain is Zinc finger protein 655 (541 aa).

Positions 1–22 (MEEVTSQEAAESPRGHFQPLEN) are disordered. 6 C2H2-type zinc fingers span residues 243–265 (YKCD…QRIH), 271–293 (YKCK…KRIH), 334–356 (YKCG…QRTH), 361–383 (CKCT…QRLH), 411–433 (YSCN…QRIH), and 439–461 (HECN…HKMH). The C2H2-type 7; degenerate zinc-finger motif lies at 495-517 (FDCDAWEENFSQRAHLIQHERVH).

The protein belongs to the krueppel C2H2-type zinc-finger protein family. Interacts with VAV1 and CDK4. Interacts with INTS13; promoting association with the integrator complex.

It is found in the nucleus. In terms of biological role, probable transcription factor. The sequence is that of Zinc finger protein 655 (Znf655) from Mus musculus (Mouse).